Here is a 344-residue protein sequence, read N- to C-terminus: Ribosomal RNA large subunit methyltransferase Cfr (344 aa).

Residue Glu88 is the Proton acceptor of the active site. Residues 95–324 (KKGWESFCIS…HANGISVATR (230 aa)) enclose the Radical SAM core domain. The cysteines at positions 102 and 335 are disulfide-linked. Positions 109, 113, and 116 each coordinate [4Fe-4S] cluster. S-adenosyl-L-methionine contacts are provided by residues 155–156 (GE), Ser186, 209–211 (SLH), and Asn290. Residue Cys335 is the S-methylcysteine intermediate of the active site.

This sequence belongs to the radical SAM superfamily. RlmN family. Cfr subfamily. [4Fe-4S] cluster serves as cofactor.

The protein resides in the cytoplasm. It carries out the reaction adenosine(2503) in 23S rRNA + 2 reduced [2Fe-2S]-[ferredoxin] + 2 S-adenosyl-L-methionine = 8-methyladenosine(2503) in 23S rRNA + 5'-deoxyadenosine + L-methionine + 2 oxidized [2Fe-2S]-[ferredoxin] + S-adenosyl-L-homocysteine. In terms of biological role, specifically methylates position 8 of adenine 2503 in 23S rRNA. Confers resistance to some classes of antibiotics. This Lachnoclostridium phytofermentans (strain ATCC 700394 / DSM 18823 / ISDg) (Clostridium phytofermentans) protein is Ribosomal RNA large subunit methyltransferase Cfr.